Reading from the N-terminus, the 213-residue chain is Cysteine dioxygenase (213 aa).

Fe cation is bound by residues His-100, His-102, and His-160. A cross-link (3'-(S-cysteinyl)-tyrosine (Cys-Tyr)) is located at residues 107–177 (CVMKVLKGSL…TNFAISLHLY (71 aa)).

This sequence belongs to the cysteine dioxygenase family. Fe cation serves as cofactor. In terms of processing, the thioether cross-link between Cys-107 and Tyr-177 plays a structural role through stabilizing the Fe(2+) ion, and prevents the production of highly damaging free hydroxyl radicals by holding the oxygen radical via hydroxyl hydrogen.

It carries out the reaction L-cysteine + O2 = 3-sulfino-L-alanine + H(+). In Ajellomyces capsulatus (strain G186AR / H82 / ATCC MYA-2454 / RMSCC 2432) (Darling's disease fungus), this protein is Cysteine dioxygenase (CDO1).